Here is a 37-residue protein sequence, read N- to C-terminus: Cytochrome b6-f complex subunit 7 (37 aa).

A helical transmembrane segment spans residues 11-29 (AVLLMVLVLVGLAWGFLLL).

This sequence belongs to the PetM family. In terms of assembly, the 4 large subunits of the cytochrome b6-f complex are cytochrome b6, subunit IV (17 kDa polypeptide, PetD), cytochrome f and the Rieske protein, while the 4 small subunits are PetG, PetL, PetM and PetN. The complex functions as a dimer.

The protein resides in the cellular thylakoid membrane. Functionally, component of the cytochrome b6-f complex, which mediates electron transfer between photosystem II (PSII) and photosystem I (PSI), cyclic electron flow around PSI, and state transitions. The chain is Cytochrome b6-f complex subunit 7 from Rippkaea orientalis (strain PCC 8801 / RF-1) (Cyanothece sp. (strain PCC 8801)).